A 338-amino-acid chain; its full sequence is Ketol-acid reductoisomerase (NADP(+)) (338 aa).

The KARI N-terminal Rossmann domain maps to 1–181 (MKVFYDKDCD…GGGRTGIIET (181 aa)). NADP(+)-binding positions include 24 to 27 (YGSQ), R47, S50, T52, and 82 to 85 (DEFQ). H107 is a catalytic residue. Residue G133 coordinates NADP(+). The region spanning 182–327 (TFKDETETDL…EQLRSMMPWI (146 aa)) is the KARI C-terminal knotted domain. The Mg(2+) site is built by D190, E194, E226, and E230. Substrate is bound at residue S251.

This sequence belongs to the ketol-acid reductoisomerase family. It depends on Mg(2+) as a cofactor.

It catalyses the reaction (2R)-2,3-dihydroxy-3-methylbutanoate + NADP(+) = (2S)-2-acetolactate + NADPH + H(+). It carries out the reaction (2R,3R)-2,3-dihydroxy-3-methylpentanoate + NADP(+) = (S)-2-ethyl-2-hydroxy-3-oxobutanoate + NADPH + H(+). The protein operates within amino-acid biosynthesis; L-isoleucine biosynthesis; L-isoleucine from 2-oxobutanoate: step 2/4. It participates in amino-acid biosynthesis; L-valine biosynthesis; L-valine from pyruvate: step 2/4. Functionally, involved in the biosynthesis of branched-chain amino acids (BCAA). Catalyzes an alkyl-migration followed by a ketol-acid reduction of (S)-2-acetolactate (S2AL) to yield (R)-2,3-dihydroxy-isovalerate. In the isomerase reaction, S2AL is rearranged via a Mg-dependent methyl migration to produce 3-hydroxy-3-methyl-2-ketobutyrate (HMKB). In the reductase reaction, this 2-ketoacid undergoes a metal-dependent reduction by NADPH to yield (R)-2,3-dihydroxy-isovalerate. This is Ketol-acid reductoisomerase (NADP(+)) from Pseudomonas fluorescens (strain ATCC BAA-477 / NRRL B-23932 / Pf-5).